A 289-amino-acid chain; its full sequence is G1/S-specific cyclin-D2 (289 aa).

A Cyclin N-terminal domain is found at Val26–Leu151. Residues Asp264–Leu289 form a disordered region. Position 271 is a phosphoserine (Ser271). Thr280 is subject to Phosphothreonine.

This sequence belongs to the cyclin family. Cyclin D subfamily. In terms of assembly, interacts with either CDK4 or CDK6 protein kinase to form a serine/threonine kinase holoenzyme complex. The cyclin subunit imparts substrate specificity to the complex. In terms of processing, phosphorylation at Thr-280 by MAP kinases is required for ubiquitination and degradation by the DCX(AMBRA1) complex. Ubiquitinated by the DCX(AMBRA1) complex during the transition from G1 to S cell phase, leading to its degradation: ubiquitination is dependent on Thr-280 phosphorylation. The DCX(AMBRA1) complex represents the major regulator of CCND2 stability during the G1/S transition. Polyubiquitinated by the SCF(FBXL2) complex, leading to proteasomal degradation.

The protein localises to the nucleus. The protein resides in the cytoplasm. It localises to the nucleus membrane. Regulatory component of the cyclin D2-CDK4 (DC) complex that phosphorylates and inhibits members of the retinoblastoma (RB) protein family including RB1 and regulates the cell-cycle during G(1)/S transition. Phosphorylation of RB1 allows dissociation of the transcription factor E2F from the RB/E2F complex and the subsequent transcription of E2F target genes which are responsible for the progression through the G(1) phase. Hypophosphorylates RB1 in early G(1) phase. Cyclin D-CDK4 complexes are major integrators of various mitogenenic and antimitogenic signals. This is G1/S-specific cyclin-D2 from Homo sapiens (Human).